The following is a 187-amino-acid chain: Elongation factor P (187 aa).

The protein belongs to the elongation factor P family.

The protein localises to the cytoplasm. The protein operates within protein biosynthesis; polypeptide chain elongation. Its function is as follows. Involved in peptide bond synthesis. Stimulates efficient translation and peptide-bond synthesis on native or reconstituted 70S ribosomes in vitro. Probably functions indirectly by altering the affinity of the ribosome for aminoacyl-tRNA, thus increasing their reactivity as acceptors for peptidyl transferase. This is Elongation factor P from Pseudarthrobacter chlorophenolicus (strain ATCC 700700 / DSM 12829 / CIP 107037 / JCM 12360 / KCTC 9906 / NCIMB 13794 / A6) (Arthrobacter chlorophenolicus).